Reading from the N-terminus, the 236-residue chain is 2-C-methyl-D-erythritol 4-phosphate cytidylyltransferase (236 aa).

Belongs to the IspD/TarI cytidylyltransferase family. IspD subfamily.

The enzyme catalyses 2-C-methyl-D-erythritol 4-phosphate + CTP + H(+) = 4-CDP-2-C-methyl-D-erythritol + diphosphate. The protein operates within isoprenoid biosynthesis; isopentenyl diphosphate biosynthesis via DXP pathway; isopentenyl diphosphate from 1-deoxy-D-xylulose 5-phosphate: step 2/6. Catalyzes the formation of 4-diphosphocytidyl-2-C-methyl-D-erythritol from CTP and 2-C-methyl-D-erythritol 4-phosphate (MEP). This chain is 2-C-methyl-D-erythritol 4-phosphate cytidylyltransferase, found in Pseudomonas syringae pv. syringae (strain B728a).